The primary structure comprises 214 residues: Thymidylate kinase (214 aa).

10-17 (GPDGAGKT) contacts ATP.

It belongs to the thymidylate kinase family.

It catalyses the reaction dTMP + ATP = dTDP + ADP. Its function is as follows. Phosphorylation of dTMP to form dTDP in both de novo and salvage pathways of dTTP synthesis. The protein is Thymidylate kinase of Lacticaseibacillus casei (strain BL23) (Lactobacillus casei).